Reading from the N-terminus, the 199-residue chain is Large ribosomal subunit protein bL9 (199 aa).

Positions Thr169–Ala199 are disordered.

This sequence belongs to the bacterial ribosomal protein bL9 family.

In terms of biological role, binds to the 23S rRNA. The polypeptide is Large ribosomal subunit protein bL9 (Novosphingobium aromaticivorans (strain ATCC 700278 / DSM 12444 / CCUG 56034 / CIP 105152 / NBRC 16084 / F199)).